The chain runs to 98 residues: DNA-directed RNA polymerase subunit omega (98 aa).

The protein belongs to the RNA polymerase subunit omega family. The RNAP catalytic core consists of 2 alpha, 1 beta, 1 beta' and 1 omega subunit. When a sigma factor is associated with the core the holoenzyme is formed, which can initiate transcription.

The catalysed reaction is RNA(n) + a ribonucleoside 5'-triphosphate = RNA(n+1) + diphosphate. In terms of biological role, promotes RNA polymerase assembly. Latches the N- and C-terminal regions of the beta' subunit thereby facilitating its interaction with the beta and alpha subunits. This Xylella fastidiosa (strain M12) protein is DNA-directed RNA polymerase subunit omega.